The chain runs to 431 residues: Chaperone SurA (431 aa).

Residues 1–20 (MKLTVVTFALLAFISFNTFA) form the signal peptide. PpiC domains are found at residues 171-272 (QAEY…KIID) and 281-381 (VAEL…QLMD).

Its subcellular location is the periplasm. The enzyme catalyses [protein]-peptidylproline (omega=180) = [protein]-peptidylproline (omega=0). In terms of biological role, chaperone involved in the correct folding and assembly of outer membrane proteins. Recognizes specific patterns of aromatic residues and the orientation of their side chains, which are found more frequently in integral outer membrane proteins. May act in both early periplasmic and late outer membrane-associated steps of protein maturation. The chain is Chaperone SurA from Pseudoalteromonas atlantica (strain T6c / ATCC BAA-1087).